A 132-amino-acid chain; its full sequence is Small ribosomal subunit protein uS11 (132 aa).

The protein belongs to the universal ribosomal protein uS11 family. In terms of assembly, part of the 30S ribosomal subunit.

Functionally, located on the platform of the 30S subunit. This Saccharolobus solfataricus (strain ATCC 35092 / DSM 1617 / JCM 11322 / P2) (Sulfolobus solfataricus) protein is Small ribosomal subunit protein uS11.